Here is a 201-residue protein sequence, read N- to C-terminus: Adenylyl-sulfate kinase (201 aa).

An ATP-binding site is contributed by 35–42; the sequence is GLSGSGKS. The active-site Phosphoserine intermediate is the serine 109.

The protein belongs to the APS kinase family.

It carries out the reaction adenosine 5'-phosphosulfate + ATP = 3'-phosphoadenylyl sulfate + ADP + H(+). The protein operates within sulfur metabolism; hydrogen sulfide biosynthesis; sulfite from sulfate: step 2/3. Its function is as follows. Catalyzes the synthesis of activated sulfate. This is Adenylyl-sulfate kinase from Prochlorococcus marinus (strain SARG / CCMP1375 / SS120).